A 154-amino-acid polypeptide reads, in one-letter code: MRRYAALMVIDAVLLSTSQALSSSHASELRSQLSAADAMFPSAERDGGIPNKRSLRRISVTESNDGERDEERGFQISILTKLQKWATKMKLPKTTKNLQFRIWPKEKKDPKAVYAELKLAGLDPKAAKANPEFADYLAYSKIWNHRGGRYMTRS.

Residues 1 to 20 (MRRYAALMVIDAVLLSTSQA) form the signal peptide. The segment at 42 to 70 (SAERDGGIPNKRSLRRISVTESNDGERDE) is disordered. A RxLR-dEER motif is present at residues 53–72 (RSLRRISVTESNDGERDEER).

Belongs to the RxLR effector family.

The protein resides in the secreted. It is found in the host cell. Secreted effector that is involved in host plant infection. Increases the susceptibility to P.infestans and reduces the plant growth. Affects the expression of host genes. This Phytophthora infestans (strain T30-4) (Potato late blight agent) protein is Secreted RxLR effector protein PITG_21681.